The following is a 221-amino-acid chain: UPF0758 protein CGSHiEE_07200 (221 aa).

Residues 99–221 (IINDPETVKL…CYSFAENCLL (123 aa)) enclose the MPN domain. 3 residues coordinate Zn(2+): histidine 170, histidine 172, and aspartate 183. Residues 170-183 (HNHPSGVTEPSYSD) carry the JAMM motif motif.

The protein belongs to the UPF0758 family.

The polypeptide is UPF0758 protein CGSHiEE_07200 (Haemophilus influenzae (strain PittEE)).